A 365-amino-acid chain; its full sequence is MNLAAMDPTTYDVQLEAKCVKLKQLFADFDTPELETFSSEPAHYRMRAEFRVWHEGEDLYYYMFDKELNSKVRCDQFLPASELINKMMPALVELLKPNTILRHRLFQIDFLSTLSGEILVSLLYHKQLDSEWEQQAKILKQTLSTQFNVNLIGRARKQKIIFDKDFVVESLNVAGKQLQYHQIENSFTQPNGKVSVKMLEWAIDITKNSSGDLLELYCGNGNFSIALAQNFERVLATELAKPSVESAQYNIKVNQVENLQIIRMSAEDFTEAMAKKRSFRRLEGIDLDSYNCNTIFVDPPRAGLDADTVKLVQGYERIVYISCNPNTLIDNLAELSKTHKITRFALFDQFPYTDHMESGVFLEKK.

S-adenosyl-L-methionine contacts are provided by Q189, Y217, N222, E238, and D298. C323 serves as the catalytic Nucleophile. E357 functions as the Proton acceptor in the catalytic mechanism.

This sequence belongs to the class I-like SAM-binding methyltransferase superfamily. RNA M5U methyltransferase family. TrmA subfamily.

The catalysed reaction is uridine(54) in tRNA + S-adenosyl-L-methionine = 5-methyluridine(54) in tRNA + S-adenosyl-L-homocysteine + H(+). It catalyses the reaction uridine(341) in tmRNA + S-adenosyl-L-methionine = 5-methyluridine(341) in tmRNA + S-adenosyl-L-homocysteine + H(+). Dual-specificity methyltransferase that catalyzes the formation of 5-methyluridine at position 54 (m5U54) in all tRNAs, and that of position 341 (m5U341) in tmRNA (transfer-mRNA). The chain is tRNA/tmRNA (uracil-C(5))-methyltransferase from Shewanella pealeana (strain ATCC 700345 / ANG-SQ1).